The primary structure comprises 52 residues: Histone H2A (52 aa).

Residues 1–25 (MSGRGKTGGKARAKAKTRSSRAGLQ) form a disordered region. Position 2 is an N-acetylserine (S2). S2 carries the post-translational modification Phosphoserine. K6 is subject to N6-(2-hydroxyisobutyryl)lysine. Position 6 is an N6-acetyllysine (K6). Over residues 7–19 (TGGKARAKAKTRS) the composition is skewed to basic residues. Position 10 is an N6-(2-hydroxyisobutyryl)lysine; alternate (K10). K10 bears the N6-lactoyllysine; alternate mark. K10 is modified (N6-succinyllysine). Glycyl lysine isopeptide (Lys-Gly) (interchain with G-Cter in ubiquitin) cross-links involve residues K14 and K16. K37 is modified (N6-(2-hydroxyisobutyryl)lysine; alternate).

As to quaternary structure, the nucleosome is a histone octamer containing two molecules each of H2A, H2B, H3 and H4 assembled in one H3-H4 heterotetramer and two H2A-H2B heterodimers. The octamer wraps approximately 147 bp of DNA. Post-translationally, acetylation is not necessary for the antibacterial activity. In terms of processing, monoubiquitination in C-terminus gives a specific tag for epigenetic transcriptional repression. Following DNA double-strand breaks (DSBs), it is ubiquitinated through 'Lys-63' linkage of ubiquitin moieties, leading to the recruitment of repair proteins to sites of DNA damage. H2AK119Ub and ionizing radiation-induced 'Lys-63'-linked ubiquitination are distinct events. Phosphorylation on Ser-2 is enhanced during mitosis. Phosphorylation on Ser-2 directly represses transcription.

Its subcellular location is the nucleus. The protein resides in the chromosome. It localises to the secreted. In terms of biological role, core component of nucleosome. Nucleosomes wrap and compact DNA into chromatin, limiting DNA accessibility to the cellular machineries which require DNA as a template. Histones thereby play a central role in transcription regulation, DNA repair, DNA replication and chromosomal stability. DNA accessibility is regulated via a complex set of post-translational modifications of histones, also called histone code, and nucleosome remodeling. Its function is as follows. Hipposin shows strong antimicrobial activity against several Gram-positive and Gram-negative bacteria. The protein is Histone H2A of Hippoglossus hippoglossus (Atlantic halibut).